The chain runs to 269 residues: Regulating synaptic membrane exocytosis protein 4 (269 aa).

Residues 115–233 (PMGDVEIGLQ…DLTTLAVGWY (119 aa)) enclose the C2 domain. Phosphoserine occurs at positions 254 and 257.

As to quaternary structure, binds PPFIA3. Does not bind RAB3.

Its subcellular location is the synapse. Regulates synaptic membrane exocytosis. This chain is Regulating synaptic membrane exocytosis protein 4 (Rims4), found in Mus musculus (Mouse).